The following is an 802-amino-acid chain: Threonine--tRNA ligase 2, cytoplasmic (802 aa).

An N-acetylalanine modification is found at A2. 2 coiled-coil regions span residues 3–23 (AEAL…EDIR) and 76–96 (AEER…AQEA). Low complexity predominate over residues 86 to 98 (ESAELEAAQEAGA). Positions 86–123 (ESAELEAAQEAGAQPPPSQSQDKDMKKKKMKESEADSE) are disordered. Residues 106 to 123 (QDKDMKKKKMKESEADSE) are compositionally biased toward basic and acidic residues. One can recognise a TGS domain in the interval 157 to 222 (DTSNIITVRV…EGDSSLELLT (66 aa)). S453 carries the phosphoserine modification. A Nuclear localization signal motif is present at residues 786–792 (KLKNLRK).

This sequence belongs to the class-II aminoacyl-tRNA synthetase family. In terms of assembly, may be a component of the multisynthetase complex (MSC), a large multi-subunit complex which contains at least eight different aminoacyl-tRNA synthetases plus three auxillary subunits AIMP1, AIMP2 and EEF1E1. Interacts with the MSC components EPRS1, AIMP1, AIMP2 and KARS1.

It localises to the cytoplasm. The protein localises to the nucleus. The enzyme catalyses tRNA(Thr) + L-threonine + ATP = L-threonyl-tRNA(Thr) + AMP + diphosphate + H(+). Its function is as follows. Catalyzes the attachment of threonine to tRNA(Thr) in a two-step reaction: threonine is first activated by ATP to form Thr-AMP and then transferred to the acceptor end of tRNA(Thr). Also edits incorrectly charged tRNA(Thr) via its editing domain, at the post-transfer stage. The sequence is that of Threonine--tRNA ligase 2, cytoplasmic from Homo sapiens (Human).